The following is a 187-amino-acid chain: Nicotinamide-nucleotide adenylyltransferase (187 aa).

Belongs to the archaeal NMN adenylyltransferase family.

The protein localises to the cytoplasm. The enzyme catalyses beta-nicotinamide D-ribonucleotide + ATP + H(+) = diphosphate + NAD(+). It participates in cofactor biosynthesis; NAD(+) biosynthesis; NAD(+) from nicotinamide D-ribonucleotide: step 1/1. The protein is Nicotinamide-nucleotide adenylyltransferase of Thermococcus onnurineus (strain NA1).